The primary structure comprises 800 residues: Putative antiporter subunit mnhA2 (800 aa).

The next 20 helical transmembrane spans lie at Met-1 to Ser-21, Ile-33 to Ala-53, Gly-78 to Ala-98, Leu-118 to Phe-138, Phe-167 to Met-187, Gly-207 to Phe-227, Thr-241 to Leu-261, Tyr-273 to Leu-293, Gly-300 to Gly-320, Ile-331 to Ile-351, Leu-387 to Ser-407, Phe-424 to Phe-444, Pro-472 to Val-492, Gly-527 to Ile-547, Ile-595 to Leu-615, Gly-627 to Ile-647, Leu-651 to Met-671, Leu-676 to Ser-696, Ile-712 to Thr-732, and Leu-768 to Leu-788.

Belongs to the CPA3 antiporters (TC 2.A.63) subunit A family. As to quaternary structure, may form a heterooligomeric complex that consists of seven subunits: mnhA2, mnhB2, mnhC2, mnhD2, mnhE2, mnhF2 and mnhG2.

The protein resides in the cell membrane. The polypeptide is Putative antiporter subunit mnhA2 (mnhA2) (Staphylococcus aureus (strain USA300)).